We begin with the raw amino-acid sequence, 260 residues long: BTB/POZ domain-containing protein KCTD21 (260 aa).

Residues 3–72 (DPITLNVGGK…LRTSHLDLPE (70 aa)) form the BTB domain. Positions 88–112 (QVQPLIEALQEKEVELSKAEKNAML) form a coiled coil.

Homopentamer. Interacts with KCTD11; KCTD21 and KCTD11 may associate in pentameric assemblies. Interacts (via BTB domain) with CUL3; indicative for a participation in a BCR (BTB-CUL3-RBX1) E3 ubiquitin-protein ligase complex. Highly expressed in cerebellum and brain. Expressed in adult cerebellum (at protein level).

It functions in the pathway protein modification; protein ubiquitination. In terms of biological role, probable substrate-specific adapter of a BCR (BTB-CUL3-RBX1) E3 ubiquitin-protein ligase complex mediating the ubiquitination and subsequent proteasomal degradation of target proteins. Promotes the ubiquitination of HDAC1. Can function as antagonist of the Hedgehog pathway by affecting the nuclear transfer of transcription factor GLI1; the function probably occurs via HDAC1 down-regulation, keeping GLI1 acetylated and inactive. Inhibits cell growth and tumorigenicity of medulloblastoma (MDB). In Mus musculus (Mouse), this protein is BTB/POZ domain-containing protein KCTD21 (Kctd21).